A 210-amino-acid chain; its full sequence is Endonuclease III (210 aa).

The region spanning arginine 108–asparagine 127 is the HhH domain. Positions 187, 194, 197, and 203 each coordinate [4Fe-4S] cluster.

The protein belongs to the Nth/MutY family. It depends on [4Fe-4S] cluster as a cofactor.

It catalyses the reaction 2'-deoxyribonucleotide-(2'-deoxyribose 5'-phosphate)-2'-deoxyribonucleotide-DNA = a 3'-end 2'-deoxyribonucleotide-(2,3-dehydro-2,3-deoxyribose 5'-phosphate)-DNA + a 5'-end 5'-phospho-2'-deoxyribonucleoside-DNA + H(+). DNA repair enzyme that has both DNA N-glycosylase activity and AP-lyase activity. The DNA N-glycosylase activity releases various damaged pyrimidines from DNA by cleaving the N-glycosidic bond, leaving an AP (apurinic/apyrimidinic) site. The AP-lyase activity cleaves the phosphodiester bond 3' to the AP site by a beta-elimination, leaving a 3'-terminal unsaturated sugar and a product with a terminal 5'-phosphate. In Buchnera aphidicola subsp. Acyrthosiphon pisum (strain APS) (Acyrthosiphon pisum symbiotic bacterium), this protein is Endonuclease III.